Here is a 64-residue protein sequence, read N- to C-terminus: Protein DsrB (64 aa).

Belongs to the DsrB family.

This Salmonella arizonae (strain ATCC BAA-731 / CDC346-86 / RSK2980) protein is Protein DsrB.